A 219-amino-acid polypeptide reads, in one-letter code: Rho-related protein racN (219 aa).

Residue 12–19 coordinates GTP; the sequence is GDVTIGKT. The Effector region motif lies at 33–41; that stretch reads YIPTIFDNH. GTP is bound by residues 58-62 and 114-117; these read DTGGG and TKTD. A Cysteine methyl ester modification is found at C216. Residue C216 is the site of S-geranylgeranyl cysteine attachment. The propeptide at 217-219 is removed in mature form; it reads IIC.

It belongs to the small GTPase superfamily. Rho family.

It is found in the cell membrane. This Dictyostelium discoideum (Social amoeba) protein is Rho-related protein racN (racN).